Consider the following 254-residue polypeptide: O-antigen biosynthesis glycosyltransferase WbnJ (254 aa).

This sequence belongs to the glycosyltransferase 2 family.

The catalysed reaction is an N-acetyl-alpha-D-galactosaminyl derivative + UDP-alpha-D-galactose = a beta-D-galactosyl-(1-&gt;3)-N-acetyl-alpha-D-galactosaminyl derivative + UDP + H(+). It catalyses the reaction alpha-D-GalNAc-(1-&gt;3)-alpha-D-GalNAc-di-trans,octa-cis-undecaprenyl diphosphate + UDP-alpha-D-galactose = beta-D-Gal-(1-&gt;3)-alpha-D-GalNAc-(1-&gt;3)-alpha-D-GalNAc-di-trans,octa-cis-undecaprenyl diphosphate + UDP + H(+). It participates in bacterial outer membrane biogenesis; LPS O-antigen biosynthesis. Functionally, involved in the assembly of the O-repeating unit during O-antigen biosynthesis. The protein is O-antigen biosynthesis glycosyltransferase WbnJ of Escherichia coli.